Reading from the N-terminus, the 273-residue chain is 4-hydroxy-tetrahydrodipicolinate reductase (273 aa).

Residues 8–13 (GAAGRM), Glu34, 102–104 (GTT), and 128–131 (SSNM) contribute to the NAD(+) site. The active-site Proton donor/acceptor is the His160. Residue His161 coordinates (S)-2,3,4,5-tetrahydrodipicolinate. The active-site Proton donor is Lys164. A (S)-2,3,4,5-tetrahydrodipicolinate-binding site is contributed by 170-171 (GT).

The protein belongs to the DapB family.

It is found in the cytoplasm. It carries out the reaction (S)-2,3,4,5-tetrahydrodipicolinate + NAD(+) + H2O = (2S,4S)-4-hydroxy-2,3,4,5-tetrahydrodipicolinate + NADH + H(+). It catalyses the reaction (S)-2,3,4,5-tetrahydrodipicolinate + NADP(+) + H2O = (2S,4S)-4-hydroxy-2,3,4,5-tetrahydrodipicolinate + NADPH + H(+). It participates in amino-acid biosynthesis; L-lysine biosynthesis via DAP pathway; (S)-tetrahydrodipicolinate from L-aspartate: step 4/4. Its function is as follows. Catalyzes the conversion of 4-hydroxy-tetrahydrodipicolinate (HTPA) to tetrahydrodipicolinate. The sequence is that of 4-hydroxy-tetrahydrodipicolinate reductase from Methanobrevibacter smithii (strain ATCC 35061 / DSM 861 / OCM 144 / PS).